The sequence spans 315 residues: Probable cytochrome c oxidase subunit 2 (315 aa).

Positions 6 to 53 (RHLSKPAYREEFKGDTSPRTAAYISNRADASLGSTYKLPLEAKFWKMS) constitute an RPE1 insert domain. Helical transmembrane passes span 41–61 (YKLPLEAKFWKMSIALICFLI), 96–116 (LLYISTAIVLFVAGLLGFVCI), and 133–153 (VLIEIIWTVIPIIILVIIAVP). Histidine 235, cysteine 270, cysteine 274, and histidine 278 together coordinate Cu cation.

The protein belongs to the cytochrome c oxidase subunit 2 family. The cofactor is Cu cation. It depends on heme as a cofactor.

It is found in the cell membrane. The enzyme catalyses 4 Fe(II)-[cytochrome c] + O2 + 8 H(+)(in) = 4 Fe(III)-[cytochrome c] + 2 H2O + 4 H(+)(out). In terms of biological role, subunits I and II form the functional core of the enzyme complex. Electrons originating in cytochrome c are transferred via heme a and Cu(A) to the binuclear center formed by heme a3 and Cu(B). In Rickettsia felis (strain ATCC VR-1525 / URRWXCal2) (Rickettsia azadi), this protein is Probable cytochrome c oxidase subunit 2 (ctaC).